Consider the following 430-residue polypeptide: MGKSWFSAVKKALSPEPKQKKEQKPHKSKKWFGKSKKLDVTNSGAAYSPRTVKDAKLKEIEEQQSRHAYSVAIATAAAAEAAVAAAQAAAEVVRLSALSRFPGKSMEEIAAIKIQTAFRGYMARRALRALRGLVRLKSLVQGKCVRRQATSTLQSMQTLARVQYQIRERRLRLSEDKQALTRQLQQKHNKDFDKTGENWNDSTLSREKVEANMLNKQVATMRREKALAYAFSHQNTWKNSTKMGSQTFMDPNNPHWGWSWLERWMAARPNENHSLTPDNAEKDSSARSVASRAMSEMIPRGKNLSPRGKTPNSRRGSSPRVRQVPSEDSNSIVSFQSEQPCNRRHSTCGSIPSTRDDESFTSSFSQSVPGYMAPTQAAKARARFSNLSPLSSEKTAKKRLSFSGSPKTVRRFSGPPKLESNVTKKDTNLA.

Residues 1-36 (MGKSWFSAVKKALSPEPKQKKEQKPHKSKKWFGKSK) are disordered. Residues 9–16 (VKKALSPE) carry the Nuclear localization signal 1 motif. A compositionally biased stretch (basic residues) spans 23–35 (QKPHKSKKWFGKS). One can recognise an IQ domain in the interval 107 to 135 (EEIAAIKIQTAFRGYMARRALRALRGLVR). Positions 170–224 (RLRLSEDKQALTRQLQQKHNKDFDKTGENWNDSTLSREKVEANMLNKQVATMRRE) form a coiled coil. The calmodulin-binding stretch occupies residues 213–231 (MLNKQVATMRREKALAYAF). Disordered stretches follow at residues 271-368 (ENHS…SQSV) and 385-430 (SNLS…TNLA). Positions 286-295 (ARSVASRAMS) are enriched in low complexity. Polar residues predominate over residues 326–340 (SEDSNSIVSFQSEQP). The short motif at 396–403 (AKKRLSFS) is the Nuclear localization signal 2 element.

Belongs to the IQD family. In terms of assembly, binds to multiple calmodulin (CaM) in the presence of Ca(2+) and CaM-like proteins.

It is found in the nucleus. The protein resides in the nucleolus. The protein localises to the cytoplasm. It localises to the cytoskeleton. Functionally, may be involved in cooperative interactions with calmodulins or calmodulin-like proteins. Recruits calmodulin proteins to microtubules, thus being a potential scaffold in cellular signaling and trafficking. May associate with nucleic acids and regulate gene expression at the transcriptional or post-transcriptional level. In Arabidopsis thaliana (Mouse-ear cress), this protein is Protein IQ-DOMAIN 3.